We begin with the raw amino-acid sequence, 334 residues long: MDERLVSTEADNHESAIEQSLRPQTLSQYIGQQKVKDNLSVFIEAARMRQETLDHVLLYGPPGLGKTTLASIIANEMNVQLRTTSGPAIERPGDLAAILTSLEPGDVLFIDEIHRLQRSIEEVLYPAMEDFCLDIVIGKGDTARSVRLDLPPFTLVGATTRVGLLTAPLRDRFGVHARLEYYEQRDLAHIVSRTAELFEIGIDLRSAEEIARRSRGTPRVANRLLRRVRDFAQVLGNHSITEDIAEDALERLQVDKLGLDHIDHKLLLSMIEKFRGGPVGLDTISATIGEESHTIEDVYEPYLLQIGFLQRTPRGRVVTREAYEHFQMEVPIRD.

The large ATPase domain (RuvB-L) stretch occupies residues 1–182 (MDERLVSTEA…FGVHARLEYY (182 aa)). ATP-binding positions include Leu-21, Arg-22, Gly-63, Lys-66, Thr-67, Thr-68, 129-131 (EDF), Arg-172, Tyr-182, and Arg-219. Residue Thr-67 participates in Mg(2+) binding. A small ATPAse domain (RuvB-S) region spans residues 183–253 (EQRDLAHIVS…IAEDALERLQ (71 aa)). The head domain (RuvB-H) stretch occupies residues 256 to 334 (KLGLDHIDHK…HFQMEVPIRD (79 aa)). DNA contacts are provided by Arg-311 and Arg-316.

The protein belongs to the RuvB family. As to quaternary structure, homohexamer. Forms an RuvA(8)-RuvB(12)-Holliday junction (HJ) complex. HJ DNA is sandwiched between 2 RuvA tetramers; dsDNA enters through RuvA and exits via RuvB. An RuvB hexamer assembles on each DNA strand where it exits the tetramer. Each RuvB hexamer is contacted by two RuvA subunits (via domain III) on 2 adjacent RuvB subunits; this complex drives branch migration. In the full resolvosome a probable DNA-RuvA(4)-RuvB(12)-RuvC(2) complex forms which resolves the HJ.

It localises to the cytoplasm. It carries out the reaction ATP + H2O = ADP + phosphate + H(+). Functionally, the RuvA-RuvB-RuvC complex processes Holliday junction (HJ) DNA during genetic recombination and DNA repair, while the RuvA-RuvB complex plays an important role in the rescue of blocked DNA replication forks via replication fork reversal (RFR). RuvA specifically binds to HJ cruciform DNA, conferring on it an open structure. The RuvB hexamer acts as an ATP-dependent pump, pulling dsDNA into and through the RuvAB complex. RuvB forms 2 homohexamers on either side of HJ DNA bound by 1 or 2 RuvA tetramers; 4 subunits per hexamer contact DNA at a time. Coordinated motions by a converter formed by DNA-disengaged RuvB subunits stimulates ATP hydrolysis and nucleotide exchange. Immobilization of the converter enables RuvB to convert the ATP-contained energy into a lever motion, pulling 2 nucleotides of DNA out of the RuvA tetramer per ATP hydrolyzed, thus driving DNA branch migration. The RuvB motors rotate together with the DNA substrate, which together with the progressing nucleotide cycle form the mechanistic basis for DNA recombination by continuous HJ branch migration. Branch migration allows RuvC to scan DNA until it finds its consensus sequence, where it cleaves and resolves cruciform DNA. The chain is Holliday junction branch migration complex subunit RuvB from Bacillus pumilus (strain SAFR-032).